We begin with the raw amino-acid sequence, 373 residues long: 4-hydroxy-3-methylbut-2-en-1-yl diphosphate synthase (flavodoxin) (373 aa).

[4Fe-4S] cluster is bound by residues Cys-270, Cys-273, Cys-305, and Glu-312.

The protein belongs to the IspG family. The cofactor is [4Fe-4S] cluster.

The enzyme catalyses (2E)-4-hydroxy-3-methylbut-2-enyl diphosphate + oxidized [flavodoxin] + H2O + 2 H(+) = 2-C-methyl-D-erythritol 2,4-cyclic diphosphate + reduced [flavodoxin]. The protein operates within isoprenoid biosynthesis; isopentenyl diphosphate biosynthesis via DXP pathway; isopentenyl diphosphate from 1-deoxy-D-xylulose 5-phosphate: step 5/6. Functionally, converts 2C-methyl-D-erythritol 2,4-cyclodiphosphate (ME-2,4cPP) into 1-hydroxy-2-methyl-2-(E)-butenyl 4-diphosphate. The polypeptide is 4-hydroxy-3-methylbut-2-en-1-yl diphosphate synthase (flavodoxin) (Pectobacterium carotovorum subsp. carotovorum (strain PC1)).